The following is a 184-amino-acid chain: Transposon Tn917 resolvase (184 aa).

A Resolvase/invertase-type recombinase catalytic domain is found at 1–134 (MIFGYARVST…SGLKAARVRG (134 aa)). Ser9 functions as the O-(5'-phospho-DNA)-serine intermediate in the catalytic mechanism. A DNA-binding region (H-T-H motif) is located at residues 161–180 (IRQILDASKLSKTTFYRYLN).

This sequence belongs to the site-specific recombinase resolvase family.

In terms of biological role, resolvase catalyzes the resolution (a site-specific recombination) of the cointegrated replicon to yield the final transposition products. The protein is Transposon Tn917 resolvase (tnpR) of Enterococcus faecalis (Streptococcus faecalis).